A 382-amino-acid polypeptide reads, in one-letter code: Lipid-A-disaccharide synthase (382 aa).

It belongs to the LpxB family.

It carries out the reaction a lipid X + a UDP-2-N,3-O-bis[(3R)-3-hydroxyacyl]-alpha-D-glucosamine = a lipid A disaccharide + UDP + H(+). Its pathway is bacterial outer membrane biogenesis; LPS lipid A biosynthesis. Its function is as follows. Condensation of UDP-2,3-diacylglucosamine and 2,3-diacylglucosamine-1-phosphate to form lipid A disaccharide, a precursor of lipid A, a phosphorylated glycolipid that anchors the lipopolysaccharide to the outer membrane of the cell. In Dechloromonas aromatica (strain RCB), this protein is Lipid-A-disaccharide synthase.